The sequence spans 480 residues: MTADMLSHDLSLLIPELVLAGGAMALLMLGVFLKGDGTEKLVQWLTVGLLAAAALAALFLVSGEGMAFNDSFVFDSLARFSKTAIGLVAAIAMLLAMPYLQAEKLGKIEYPVLVVLAVTGMMMMVSANDLIAMYMGIELQSLALYVLAAFNRDSLRASEAGLKYFVLGALSSGLLLYGASLVYGFAGSTGFGDIALAVESGSNIGLTVGLVFVICGLAFKVSAAPFHMWTPDVYEGAPTPVTAFFATAPKFAAIVLLARVLMEPFGAVVDQWRDVIWMIAVLSMAVGAFGALTQQNIKRLMAYSSISNMGYALVAVAAASQTGLWALLVFMVLYMVGAIGSFATILSMRTREGMVEQISDLAGLAQRNPGLGWSMTALMFSIGGLPFMVGFFGKFFVIYAAVQADLMILAVLAVLFSVVGAAYYLRIVKVIWFDSSEIEFVPSAVSTYWIARIAGLATVLLLPVLGWLVFRAYSVGLALL.

Transmembrane regions (helical) follow at residues 12–32 (LLIP…LGVF), 41–61 (LVQW…LFLV), 80–100 (FSKT…MPYL), 105–125 (LGKI…MMMV), 130–150 (LIAM…LAAF), 165–185 (FVLG…VYGF), 204–224 (IGLT…VSAA), 237–257 (APTP…IVLL), 275–295 (VIWM…LTQQ), 300–320 (LMAY…AAAS), 326–346 (ALLV…ATIL), 372–392 (GWSM…VGFF), 406–428 (LMIL…LRIV), and 450–470 (IARI…WLVF).

Belongs to the complex I subunit 2 family. As to quaternary structure, NDH-1 is composed of 14 different subunits. Subunits NuoA, H, J, K, L, M, N constitute the membrane sector of the complex.

Its subcellular location is the cell inner membrane. The enzyme catalyses a quinone + NADH + 5 H(+)(in) = a quinol + NAD(+) + 4 H(+)(out). In terms of biological role, NDH-1 shuttles electrons from NADH, via FMN and iron-sulfur (Fe-S) centers, to quinones in the respiratory chain. The immediate electron acceptor for the enzyme in this species is believed to be ubiquinone. Couples the redox reaction to proton translocation (for every two electrons transferred, four hydrogen ions are translocated across the cytoplasmic membrane), and thus conserves the redox energy in a proton gradient. In Maricaulis maris (strain MCS10) (Caulobacter maris), this protein is NADH-quinone oxidoreductase subunit N.